A 448-amino-acid polypeptide reads, in one-letter code: MGRMFGTDGVRGVANTELTARIAYDLGRAGAYVLTEGAHKPKILVAKDTRISGDMLESALIAGILSVGAEAIVLGVVPTPAVAYLTRKYGADAGVMISASHNPVEYNGIKFFNDKGYKLSDELEDEIQRVIESDFEGVPSPTGTDLGRETIEVSALDDYIEFAKNTIPYSLKGLKIALDCANGAAYKSSVKAFRELGADVFVINDNPDGTNINENCGSTHPEELMEYVIKKKCDLGFAFDGDADRCLAVDEKGNLINGDFILMLCAKYLKELGKLKDDTLVVTVMSNLGLDIACKNEKINIVKTAVGDRYVLEEMVKNKYVLGGEQSGHVIFLDYNSTGDGLVTALQIAGIVKKKEKALSELCSIMKELPQVLANATIPNDKKDLYLTDDEIQNEIRKIEEALNGVGRVLIRPSGTEPLVRVMLEGENQAEIDEMAHNLANLIEKKYN.

Ser100 functions as the Phosphoserine intermediate in the catalytic mechanism. 4 residues coordinate Mg(2+): Ser100, Asp240, Asp242, and Asp244. Residue Ser100 is modified to Phosphoserine.

This sequence belongs to the phosphohexose mutase family. Requires Mg(2+) as cofactor. In terms of processing, activated by phosphorylation.

It carries out the reaction alpha-D-glucosamine 1-phosphate = D-glucosamine 6-phosphate. Its function is as follows. Catalyzes the conversion of glucosamine-6-phosphate to glucosamine-1-phosphate. The sequence is that of Phosphoglucosamine mutase from Clostridium beijerinckii (strain ATCC 51743 / NCIMB 8052) (Clostridium acetobutylicum).